We begin with the raw amino-acid sequence, 80 residues long: UPF0125 protein XF_2346 (80 aa).

This sequence belongs to the UPF0125 (RnfH) family.

The sequence is that of UPF0125 protein XF_2346 from Xylella fastidiosa (strain 9a5c).